Reading from the N-terminus, the 282-residue chain is Phosphatidylglycerol--prolipoprotein diacylglyceryl transferase (282 aa).

3 helical membrane passes run 18-38 (LSIK…YFIA), 55-75 (VIFY…VIFQ), and 89-109 (IWHG…TGII). Arg137 contacts a 1,2-diacyl-sn-glycero-3-phospho-(1'-sn-glycerol). Transmembrane regions (helical) follow at residues 203–223 (VGET…FVEG) and 235–255 (IRVA…ILIY).

This sequence belongs to the Lgt family.

It is found in the cell membrane. It carries out the reaction L-cysteinyl-[prolipoprotein] + a 1,2-diacyl-sn-glycero-3-phospho-(1'-sn-glycerol) = an S-1,2-diacyl-sn-glyceryl-L-cysteinyl-[prolipoprotein] + sn-glycerol 1-phosphate + H(+). Its pathway is protein modification; lipoprotein biosynthesis (diacylglyceryl transfer). Its function is as follows. Catalyzes the transfer of the diacylglyceryl group from phosphatidylglycerol to the sulfhydryl group of the N-terminal cysteine of a prolipoprotein, the first step in the formation of mature lipoproteins. The polypeptide is Phosphatidylglycerol--prolipoprotein diacylglyceryl transferase (Staphylococcus haemolyticus (strain JCSC1435)).